The chain runs to 108 residues: MGCCGCGGCGGGCGGCSGGCGGGCGGGCGGGGCGGGCGSCTTCRCYRVGCCSSCCPCCRGCCGGCCSTPVICCCRRTCSSCGCGYGKGCCQQKGCCQQKCCCQKQCCC.

Positions 4–84 (CGCGGCGGGC…RRTCSSCGCG (81 aa)) are 12 X 2 AA repeats of CG.

This sequence belongs to the KRTAP type 28 family.

In terms of biological role, in the hair cortex, hair keratin intermediate filaments are embedded in an interfilamentous matrix, consisting of hair keratin-associated proteins (KRTAP), which are essential for the formation of a rigid and resistant hair shaft through their extensive disulfide bond cross-linking with abundant cysteine residues of hair keratins. The matrix proteins include the high-sulfur and high-glycine-tyrosine keratins. The sequence is that of Small cysteine and glycine repeat-containing protein 8 from Homo sapiens (Human).